Reading from the N-terminus, the 99-residue chain is MLKPNMLIIIFIIVCLFSIIIFTVLKSKRGDDDESDDGFSCYNKPIGVNFPHPTRCDAFYMCVGLNQKLELICPEGFEFDPDVKNCVPISDYGCTANQN.

One can recognise a Chitin-binding type-2 domain in the interval 38 to 96; the sequence is GFSCYNKPIGVNFPHPTRCDAFYMCVGLNQKLELICPEGFEFDPDVKNCVPISDYGCTA. Cys73 and Cys86 are joined by a disulfide.

Its subcellular location is the host nucleus. It is found in the virion. In terms of biological role, plays a role in primary oral infection of the host. In Autographa californica nuclear polyhedrosis virus (AcMNPV), this protein is Protein AC150.